The following is a 914-amino-acid chain: Translation initiation factor IF-2 (914 aa).

Disordered stretches follow at residues 52 to 84 (GGGK…VKAP) and 98 to 326 (AGGN…GVRL). Residues 57–68 (AEGAAKAPAKAA) are compositionally biased toward low complexity. A compositionally biased stretch (basic and acidic residues) spans 69 to 84 (AKGDAKTAAKGDVKAP). Positions 98-138 (AGGNGEAAAPPAQPGGTATTPAAQATPEAPARPGPAAARPS) are enriched in low complexity. Pro residues-rich tracts occupy residues 139-169 (APAP…PAPK) and 193-207 (PRPV…PGAP). The span at 236-296 (RPGGGRPGGP…GAAGAFGRPG (61 aa)) shows a compositional bias: gly residues. Positions 300-309 (RRGRKSKRQK) are enriched in basic residues. One can recognise a tr-type G domain in the interval 421-581 (TRPPVVTVMG…AVLLTADAAL (161 aa)). Residues 430–437 (GHVDHGKT), 469–473 (DTPGH), and 523–526 (NKID) each bind GTP.

This sequence belongs to the TRAFAC class translation factor GTPase superfamily. Classic translation factor GTPase family. IF-2 subfamily.

The protein resides in the cytoplasm. One of the essential components for the initiation of protein synthesis. Protects formylmethionyl-tRNA from spontaneous hydrolysis and promotes its binding to the 30S ribosomal subunits. Also involved in the hydrolysis of GTP during the formation of the 70S ribosomal complex. This Mycobacterium avium (strain 104) protein is Translation initiation factor IF-2.